We begin with the raw amino-acid sequence, 155 residues long: Small ribosomal subunit protein uS7 (155 aa).

This sequence belongs to the universal ribosomal protein uS7 family. In terms of assembly, part of the 30S ribosomal subunit. Contacts proteins S9 and S11.

Its function is as follows. One of the primary rRNA binding proteins, it binds directly to 16S rRNA where it nucleates assembly of the head domain of the 30S subunit. Is located at the subunit interface close to the decoding center, probably blocks exit of the E-site tRNA. This chain is Small ribosomal subunit protein uS7, found in Cytophaga hutchinsonii (strain ATCC 33406 / DSM 1761 / CIP 103989 / NBRC 15051 / NCIMB 9469 / D465).